Consider the following 473-residue polypeptide: Arginine biosynthesis bifunctional protein ArgJ, mitochondrial (473 aa).

6 residues coordinate substrate: threonine 201, lysine 230, threonine 241, glutamate 328, asparagine 468, and threonine 473. Residue threonine 241 is the Nucleophile of the active site.

The protein belongs to the ArgJ family. In terms of assembly, heterodimer of an alpha and a beta chain. The alpha and beta chains are autoproteolytically processed from a single precursor protein within the mitochondrion.

It localises to the mitochondrion matrix. The catalysed reaction is N(2)-acetyl-L-ornithine + L-glutamate = N-acetyl-L-glutamate + L-ornithine. It carries out the reaction L-glutamate + acetyl-CoA = N-acetyl-L-glutamate + CoA + H(+). Its pathway is amino-acid biosynthesis; L-arginine biosynthesis; L-ornithine and N-acetyl-L-glutamate from L-glutamate and N(2)-acetyl-L-ornithine (cyclic): step 1/1. It functions in the pathway amino-acid biosynthesis; L-arginine biosynthesis; N(2)-acetyl-L-ornithine from L-glutamate: step 1/4. Catalyzes two activities which are involved in the cyclic version of arginine biosynthesis: the synthesis of acetylglutamate from glutamate and acetyl-CoA, and of ornithine by transacetylation between acetylornithine and glutamate. This is Arginine biosynthesis bifunctional protein ArgJ, mitochondrial from Blastomyces gilchristii (strain SLH14081) (Blastomyces dermatitidis).